The chain runs to 369 residues: Histidinol-phosphate aminotransferase (369 aa).

Residue lysine 223 is modified to N6-(pyridoxal phosphate)lysine.

Belongs to the class-II pyridoxal-phosphate-dependent aminotransferase family. Histidinol-phosphate aminotransferase subfamily. Homodimer. It depends on pyridoxal 5'-phosphate as a cofactor.

The enzyme catalyses L-histidinol phosphate + 2-oxoglutarate = 3-(imidazol-4-yl)-2-oxopropyl phosphate + L-glutamate. It participates in amino-acid biosynthesis; L-histidine biosynthesis; L-histidine from 5-phospho-alpha-D-ribose 1-diphosphate: step 7/9. Catalyzes the conversion of imidazole acetol phosphate to histidinol phosphate. Can also transaminate aromatic amino acids and histidine in addition to histidinol phosphate. The polypeptide is Histidinol-phosphate aminotransferase (Zymomonas mobilis subsp. mobilis (strain ATCC 31821 / ZM4 / CP4)).